The primary structure comprises 503 residues: ATP synthase subunit alpha (503 aa).

170–177 (GDRKTGKT) lines the ATP pocket.

Belongs to the ATPase alpha/beta chains family. In terms of assembly, F-type ATPases have 2 components, CF(1) - the catalytic core - and CF(0) - the membrane proton channel. CF(1) has five subunits: alpha(3), beta(3), gamma(1), delta(1), epsilon(1). CF(0) has four main subunits: a, b, b' and c.

The protein resides in the cellular thylakoid membrane. It carries out the reaction ATP + H2O + 4 H(+)(in) = ADP + phosphate + 5 H(+)(out). Produces ATP from ADP in the presence of a proton gradient across the membrane. The alpha chain is a regulatory subunit. This is ATP synthase subunit alpha from Gloeothece citriformis (strain PCC 7424) (Cyanothece sp. (strain PCC 7424)).